A 361-amino-acid polypeptide reads, in one-letter code: Salt tolerance receptor-like cytoplasmic kinase 1 (361 aa).

Residues Cys5, Cys10, and Cys14 are each lipidated (S-palmitoyl cysteine). Residues 67-347 (GFSSRVIGHG…RALQEKTSAL (281 aa)) form the Protein kinase domain. ATP contacts are provided by residues 73 to 81 (IGHGGFSTV) and Lys95. The active-site Proton acceptor is Asp195.

The protein belongs to the protein kinase superfamily. Ser/Thr protein kinase family. In terms of assembly, self-interacts. Interacts with CATA, CATB and CATC at the plasma membrane. Palmitoylated. Palmotylation at Cys-5, Cys-10 and Cys-14 by DHHC9 is required for plasma membrane targeting and STRK1 function. In terms of processing, autophosphorylated. In terms of tissue distribution, accumulates in seeds. Mainly expressed in young roots, and, to a lower extent, in leaf veins, seedlings, stems, leaf sheath and young spikelet.

The protein localises to the cell membrane. The catalysed reaction is L-seryl-[protein] + ATP = O-phospho-L-seryl-[protein] + ADP + H(+). It catalyses the reaction L-threonyl-[protein] + ATP = O-phospho-L-threonyl-[protein] + ADP + H(+). The enzyme catalyses L-tyrosyl-[protein] + ATP = O-phospho-L-tyrosyl-[protein] + ADP + H(+). Acts probably as a dual specificity protein kinase. Regulates hydrogen peroxide (H(2)O(2)) homeostasis and improves salt tolerance by phosphorylating tyrosine residues of CATC thus activating its catalase activity. Promotes growth at the seedling stage and prevents grain yield loss under salt stress conditions. The chain is Salt tolerance receptor-like cytoplasmic kinase 1 from Oryza sativa subsp. japonica (Rice).